The following is a 227-amino-acid chain: Probable methylthioribulose-1-phosphate dehydratase (227 aa).

Substrate is bound at residue cysteine 87. Zn(2+) contacts are provided by histidine 105 and histidine 107. The active-site Proton donor/acceptor is the glutamate 129. Histidine 185 contacts Zn(2+).

The protein belongs to the aldolase class II family. MtnB subfamily. Requires Zn(2+) as cofactor.

Its subcellular location is the cytoplasm. The enzyme catalyses 5-(methylsulfanyl)-D-ribulose 1-phosphate = 5-methylsulfanyl-2,3-dioxopentyl phosphate + H2O. The protein operates within amino-acid biosynthesis; L-methionine biosynthesis via salvage pathway; L-methionine from S-methyl-5-thio-alpha-D-ribose 1-phosphate: step 2/6. Catalyzes the dehydration of methylthioribulose-1-phosphate (MTRu-1-P) into 2,3-diketo-5-methylthiopentyl-1-phosphate (DK-MTP-1-P). In Drosophila melanogaster (Fruit fly), this protein is Probable methylthioribulose-1-phosphate dehydratase.